Here is a 124-residue protein sequence, read N- to C-terminus: Large ribosomal subunit protein bL20 (124 aa).

The protein belongs to the bacterial ribosomal protein bL20 family.

Binds directly to 23S ribosomal RNA and is necessary for the in vitro assembly process of the 50S ribosomal subunit. It is not involved in the protein synthesizing functions of that subunit. The polypeptide is Large ribosomal subunit protein bL20 (rplT) (Mycoplasma genitalium (strain ATCC 33530 / DSM 19775 / NCTC 10195 / G37) (Mycoplasmoides genitalium)).